The following is a 600-amino-acid chain: DNA mismatch repair protein MutL (600 aa).

The segment at 327-405 (DGSRAATTGA…FSPQPAAAEP (79 aa)) is disordered. Residues 349–367 (PNSQRPQTAWSAETSSSRP) show a composition bias toward polar residues.

Belongs to the DNA mismatch repair MutL/HexB family.

In terms of biological role, this protein is involved in the repair of mismatches in DNA. It is required for dam-dependent methyl-directed DNA mismatch repair. May act as a 'molecular matchmaker', a protein that promotes the formation of a stable complex between two or more DNA-binding proteins in an ATP-dependent manner without itself being part of a final effector complex. This Rhizobium johnstonii (strain DSM 114642 / LMG 32736 / 3841) (Rhizobium leguminosarum bv. viciae) protein is DNA mismatch repair protein MutL.